A 174-amino-acid polypeptide reads, in one-letter code: MNHDKSPIILIGFMGTGKSTIGKYVADEQNLSFIDIDSYIEEKYKLTIPEIFSKHGEQYFRNLEFTCLQECINTADIIATGGGIIESEEAFNFLKNQKNIIWLDCNIDIIYSRINDDPHRPNANNKTIKQLNDLYCSRNLRYNEIAFKKFDSHLLSISEIYYELLNLIKASDQY.

15–20 (GTGKST) contacts ATP. S19 contacts Mg(2+). The substrate site is built by D37, R61, and G82. R120 is an ATP binding site. Residue R138 participates in substrate binding.

The protein belongs to the shikimate kinase family. In terms of assembly, monomer. Mg(2+) is required as a cofactor.

It localises to the cytoplasm. The catalysed reaction is shikimate + ATP = 3-phosphoshikimate + ADP + H(+). Its pathway is metabolic intermediate biosynthesis; chorismate biosynthesis; chorismate from D-erythrose 4-phosphate and phosphoenolpyruvate: step 5/7. Functionally, catalyzes the specific phosphorylation of the 3-hydroxyl group of shikimic acid using ATP as a cosubstrate. The sequence is that of Shikimate kinase from Staphylococcus aureus (strain MSSA476).